A 269-amino-acid polypeptide reads, in one-letter code: Tryptophan synthase alpha chain (269 aa).

Catalysis depends on proton acceptor residues Glu-49 and Asp-60.

This sequence belongs to the TrpA family. In terms of assembly, tetramer of two alpha and two beta chains.

The enzyme catalyses (1S,2R)-1-C-(indol-3-yl)glycerol 3-phosphate + L-serine = D-glyceraldehyde 3-phosphate + L-tryptophan + H2O. It participates in amino-acid biosynthesis; L-tryptophan biosynthesis; L-tryptophan from chorismate: step 5/5. Functionally, the alpha subunit is responsible for the aldol cleavage of indoleglycerol phosphate to indole and glyceraldehyde 3-phosphate. The sequence is that of Tryptophan synthase alpha chain from Salmonella arizonae (strain ATCC BAA-731 / CDC346-86 / RSK2980).